A 130-amino-acid polypeptide reads, in one-letter code: Protein ApaG (130 aa).

The region spanning 3–127 is the ApaG domain; that stretch reads RALTRDIEVT…FSLDSPGLMR (125 aa).

The polypeptide is Protein ApaG (Agrobacterium fabrum (strain C58 / ATCC 33970) (Agrobacterium tumefaciens (strain C58))).